The primary structure comprises 90 residues: U7-theraphotoxin-Hhn1a 2 (90 aa).

Positions Met1–Ser19 are cleaved as a signal peptide. Residues Phe20–Glu50 constitute a propeptide that is removed on maturation. Disulfide bonds link Cys51-Cys65, Cys58-Cys70, and Cys64-Cys81.

It belongs to the neurotoxin 10 (Hwtx-1) family. 13 (Hntx-13) subfamily. Expressed by the venom gland.

The protein localises to the secreted. Its function is as follows. Ion channel inhibitor. This Cyriopagopus hainanus (Chinese bird spider) protein is U7-theraphotoxin-Hhn1a 2.